Here is a 247-residue protein sequence, read N- to C-terminus: Phycobilisome rod-core linker polypeptide CpcG2 (247 aa).

The PBS-linker domain maps to 11–189 (SSQNQRVPGY…YWRDKLENER (179 aa)).

This sequence belongs to the phycobilisome linker protein family. As to quaternary structure, the phycobilisome is a hemidiscoidal structure that is composed of two distinct substructures: a core complex and a number of rods radiating from the core.

The protein resides in the cellular thylakoid membrane. Its function is as follows. Rod-core linker protein required for attachment of phycocyanin to allophycocyanin in cores of phycobilisomes. Functionally, linker polypeptides determine the state of aggregation and the location of the disk-shaped phycobiliprotein units within the phycobilisome and modulate their spectroscopic properties in order to mediate a directed and optimal energy transfer. The protein is Phycobilisome rod-core linker polypeptide CpcG2 (cpcG2) of Mastigocladus laminosus (Fischerella sp.).